A 103-amino-acid chain; its full sequence is Small ribosomal subunit protein uS10 (103 aa).

It belongs to the universal ribosomal protein uS10 family. In terms of assembly, part of the 30S ribosomal subunit.

Functionally, involved in the binding of tRNA to the ribosomes. The chain is Small ribosomal subunit protein uS10 from Shewanella halifaxensis (strain HAW-EB4).